We begin with the raw amino-acid sequence, 520 residues long: Succinyl-CoA:3-ketoacid coenzyme A transferase 2A, mitochondrial (520 aa).

The N-terminal 39 residues, 1–39, are a transit peptide targeting the mitochondrion; sequence MAALRLLAWALPRGVSALRPPPALPHRLIRRYVSDRSGS. Positions 280–299 are disordered; that stretch reads ERLTTRDSKPAPGSKDNDPS. Catalysis depends on E342, which acts as the 5-glutamyl coenzyme A thioester intermediate.

Belongs to the 3-oxoacid CoA-transferase family. As to quaternary structure, homodimer.

It is found in the mitochondrion. The catalysed reaction is a 3-oxo acid + succinyl-CoA = a 3-oxoacyl-CoA + succinate. The protein operates within ketone metabolism; succinyl-CoA degradation; acetoacetyl-CoA from succinyl-CoA: step 1/1. In terms of biological role, key enzyme for ketone body catabolism. Transfers the CoA moiety from succinate to acetoacetate. Formation of the enzyme-CoA intermediate proceeds via an unstable anhydride species formed between the carboxylate groups of the enzyme and substrate. Probably play and important roles in the energy metabolism of spermatozoa. This chain is Succinyl-CoA:3-ketoacid coenzyme A transferase 2A, mitochondrial (Oxct2a), found in Mus musculus (Mouse).